A 79-amino-acid polypeptide reads, in one-letter code: Defensin-1 (79 aa).

Residues 1 to 23 (MKFLNVVAIALLVVACLAVYSNA) form the signal peptide. Disulfide bonds link cysteine 42–cysteine 69, cysteine 55–cysteine 75, and cysteine 59–cysteine 77.

Belongs to the invertebrate defensin family. Type 1 subfamily.

It localises to the secreted. This chain is Defensin-1 (SMD1), found in Stomoxys calcitrans (Stable fly).